A 535-amino-acid polypeptide reads, in one-letter code: Calcium-dependent protein kinase 1 (535 aa).

Residues 1–34 (MGCNQSKSANDVRGNKVNNVNSKKKNNKREDIND) are disordered. G2 is lipidated: N-myristoyl glycine. C3 carries S-palmitoyl cysteine lipidation. The Protein kinase domain occupies 57-324 (YFKVRKLGSG…AEEALNSRWI (268 aa)). ATP-binding positions include 63-71 (LGSGAYGEV) and K86. The residue at position 65 (S65) is a Phosphoserine. S117 is subject to Phosphoserine. Residue D190 is the Proton acceptor of the active site. Phosphoserine occurs at positions 216 and 219. T230 is subject to Phosphothreonine. S334 is modified (phosphoserine). Positions 345–352 (NMRKFEGS) match the J domain autoinhibitory motif motif. Positions 345-363 (NMRKFEGSQKLAQAAILFI) are j domain. The J domain interacts with the EF-hand domains motif lies at 353–363 (QKLAQAAILFI). EF-hand domains lie at 371–406 (EERK…LRNF), 415–450 (NVEE…KQIL), 451–486 (FSEE…GFYF), and 497–532 (VSEK…ICDN). The Ca(2+) site is built by D384, N386, D388, Q390, E395, D428, D430, N432, Y434, E439, D464, D466, S468, K470, E475, D510, N512, D514, M516, and E521.

It belongs to the protein kinase superfamily. Ser/Thr protein kinase family. CDPK subfamily. Monomer. Mg(2+) is required as a cofactor. Post-translationally, myristoylated. Myristoylation and palmitoylation are required for the localization to the parasitophorous vacuole membrane. In terms of processing, palmitoylated. Palmitoylation increases in merozoites in response to low level of extracellular K(+) in the host blood. Myristoylation and palmitoylation are required for the localization to the parasitophorous vacuole membrane. Phosphorylation at Thr-230 may regulate CDPK1 kinase activity. Phosphorylation increases in response to an increase in intracellular Ca(2+) levels. Autophosphorylated in vitro. Autophosphorylation does not affect membrane localization in vitro.

It is found in the membrane. The protein localises to the cell membrane. Its subcellular location is the parasitophorous vacuole membrane. The protein resides in the cytoplasm. It localises to the cell projection. It is found in the cilium. The protein localises to the flagellum. Its subcellular location is the host cell membrane. The enzyme catalyses L-seryl-[protein] + ATP = O-phospho-L-seryl-[protein] + ADP + H(+). It catalyses the reaction L-threonyl-[protein] + ATP = O-phospho-L-threonyl-[protein] + ADP + H(+). With respect to regulation, activated by calcium. Upon calcium binding to the EF-hand domains, the C-terminus of the junction domain (J domain) undergoes a conformational change which results in the dissociation of the pseudo-substrate inhibitory motif from the catalytic domain. This, in turn may facilitate the autophosphorylation of the activation loop at Thr-230, which leads to the kinase activation. Its function is as follows. Calcium-dependent protein kinase which acts as a sensor and effector of intracellular Ca(2+) levels probably in part downstream of cGMP-activated PKG kinase. During the liver stage, involved in sporozoite motility and thus in sporozoite invasion of host hepatocytes, probably together with CDPK4 and CDPK5. In the mosquito midgut and during the last stage of male gamete exflagellation, may play a role in the rupture of the host erythrocyte membrane. In the mosquito midgut, required for the differentiation of the zygote into the ookinete by promoting the translational activation of a subset of repressed mRNAs; these mRNAs are kept repressed in the zygote by the DOZI- or CITH-containing mRNP complexes. Dispensable during the asexual blood stage. This chain is Calcium-dependent protein kinase 1, found in Plasmodium yoelii yoelii.